The sequence spans 237 residues: Phosphoribosylaminoimidazole-succinocarboxamide synthase (237 aa).

This sequence belongs to the SAICAR synthetase family.

It catalyses the reaction 5-amino-1-(5-phospho-D-ribosyl)imidazole-4-carboxylate + L-aspartate + ATP = (2S)-2-[5-amino-1-(5-phospho-beta-D-ribosyl)imidazole-4-carboxamido]succinate + ADP + phosphate + 2 H(+). Its pathway is purine metabolism; IMP biosynthesis via de novo pathway; 5-amino-1-(5-phospho-D-ribosyl)imidazole-4-carboxamide from 5-amino-1-(5-phospho-D-ribosyl)imidazole-4-carboxylate: step 1/2. The sequence is that of Phosphoribosylaminoimidazole-succinocarboxamide synthase from Yersinia pseudotuberculosis serotype O:1b (strain IP 31758).